The following is an 84-amino-acid chain: Toxin Acra3 (84 aa).

Residues 1–17 form the signal peptide; it reads MKIIFLVLMMILSEVYS. Positions 19–82 constitute an LCN-type CS-alpha/beta domain; it reads RDGYPVHDGT…VYGDDGIFCK (64 aa). Disulfide bonds link C30-C81, C34-C57, C43-C62, and C47-C64. S83 carries the post-translational modification Serine amide.

It belongs to the long (4 C-C) scorpion toxin superfamily. Sodium channel inhibitor family. Beta subfamily. In terms of tissue distribution, expressed by the venom gland.

The protein resides in the secreted. In terms of biological role, toxin with unknown target. In vivo, induces severe neurotoxic events in mice such as excitability and convulsions, leading to the death of the animals within a few minutes after injection. Exerts very strong cytotoxic effect on a mouse brain tumor cell line (BC3H1) (IC(50)=5 mg/ml). It exerts its effects by inducing a stronger necrosis than apoptosis in BC3H1 cells. The chain is Toxin Acra3 from Androctonus crassicauda (Arabian fat-tailed scorpion).